A 123-amino-acid polypeptide reads, in one-letter code: Ribosome-binding factor A (123 aa).

It belongs to the RbfA family. In terms of assembly, monomer. Binds 30S ribosomal subunits, but not 50S ribosomal subunits or 70S ribosomes.

The protein localises to the cytoplasm. Functionally, one of several proteins that assist in the late maturation steps of the functional core of the 30S ribosomal subunit. Associates with free 30S ribosomal subunits (but not with 30S subunits that are part of 70S ribosomes or polysomes). Required for efficient processing of 16S rRNA. May interact with the 5'-terminal helix region of 16S rRNA. This chain is Ribosome-binding factor A, found in Cupriavidus metallidurans (strain ATCC 43123 / DSM 2839 / NBRC 102507 / CH34) (Ralstonia metallidurans).